Reading from the N-terminus, the 222-residue chain is Sigma non-opioid intracellular receptor 1 (222 aa).

Topologically, residues 1–6 (MSLIRT) are lumenal. The helical transmembrane segment at 7–29 (ILKLVVVVGFLSLTVQFIRHWMA) threads the bilayer. Residues 30–222 (NKQYVFTKEE…STFLTESGVL (193 aa)) are Cytoplasmic-facing. Positions 97-104 (SLTEYVLL) are important for ligand-binding. Residues 175–222 (FIPSTLGFALADTMFSTQDFLTLFYTARVYVKGMILEASTFLTESGVL) form a C-terminal hydrophobic region region.

Belongs to the ERG2 family. In terms of assembly, homotrimer.

It localises to the nucleus inner membrane. It is found in the nucleus outer membrane. The protein resides in the nucleus envelope. The protein localises to the cytoplasmic vesicle. Its subcellular location is the endoplasmic reticulum membrane. It localises to the membrane. Its function is as follows. May function in lipid transport from the endoplasmic reticulum and be involved in a wide array of cellular functions probably through regulation of the biogenesis of lipid microdomains at the plasma membrane. May regulate calcium efflux at the endoplasmic reticulum. This Danio rerio (Zebrafish) protein is Sigma non-opioid intracellular receptor 1 (sigmar1).